A 194-amino-acid chain; its full sequence is Probable WRKY transcription factor 51 (194 aa).

The tract at residues 58-97 (SSETFTGESGGSGSATTLSKKESTNRGSKESDQTKETGHR) is disordered. Residues 76–96 (SKKESTNRGSKESDQTKETGH) are compositionally biased toward basic and acidic residues. The WRKY DNA-binding region spans 104 to 169 (SKIDVMDDGF…YEGVHNHESL (66 aa)).

The protein belongs to the WRKY group II-c family. As to quaternary structure, interacts with CAMBP25/VQ15.

The protein localises to the nucleus. Its function is as follows. Transcription factor. Interacts specifically with the W box (5'-(T)TGAC[CT]-3'), a frequently occurring elicitor-responsive cis-acting element. Involved in defense responses. May act as positive regulator of salicylic acid (SA)-mediated signaling and negative regulator of jasmonic acid (JA)-mediated signaling. In Arabidopsis thaliana (Mouse-ear cress), this protein is Probable WRKY transcription factor 51 (WRKY51).